Reading from the N-terminus, the 649-residue chain is tRNA-guanine(15) transglycosylase (649 aa).

Residue D88 is the Nucleophile of the active site. Substrate-binding residues include D123 and A194. The Zn(2+) site is built by C280, C282, and C285. The 76-residue stretch at 572–647 (KYRVIVDKSV…VAVNIRGGLK (76 aa)) folds into the PUA domain.

The protein belongs to the archaeosine tRNA-ribosyltransferase family. Zn(2+) serves as cofactor.

It catalyses the reaction guanosine(15) in tRNA + 7-cyano-7-deazaguanine = 7-cyano-7-carbaguanosine(15) in tRNA + guanine. The protein operates within tRNA modification; archaeosine-tRNA biosynthesis. Its function is as follows. Exchanges the guanine residue with 7-cyano-7-deazaguanine (preQ0) at position 15 in the dihydrouridine loop (D-loop) of archaeal tRNAs. This Methanococcus vannielii (strain ATCC 35089 / DSM 1224 / JCM 13029 / OCM 148 / SB) protein is tRNA-guanine(15) transglycosylase.